Consider the following 465-residue polypeptide: Cysteine--tRNA ligase (465 aa).

Cysteine 30 provides a ligand contact to Zn(2+). Residues 32–42 (MTVYDYCHVGH) carry the 'HIGH' region motif. Zn(2+)-binding residues include cysteine 214, histidine 239, and glutamate 243. The 'KMSKS' region signature appears at 271–275 (KMSKS). Lysine 274 lines the ATP pocket.

The protein belongs to the class-I aminoacyl-tRNA synthetase family. Monomer. Requires Zn(2+) as cofactor.

It localises to the cytoplasm. The enzyme catalyses tRNA(Cys) + L-cysteine + ATP = L-cysteinyl-tRNA(Cys) + AMP + diphosphate. This is Cysteine--tRNA ligase from Paraburkholderia xenovorans (strain LB400).